The following is a 295-amino-acid chain: Aspartate carbamoyltransferase catalytic subunit (295 aa).

2 residues coordinate carbamoyl phosphate: R54 and T55. K82 serves as a coordination point for L-aspartate. Residues R104, H132, and Q135 each coordinate carbamoyl phosphate. Residues R165 and R218 each contribute to the L-aspartate site. Residues G257 and P258 each coordinate carbamoyl phosphate.

This sequence belongs to the aspartate/ornithine carbamoyltransferase superfamily. ATCase family. In terms of assembly, heterododecamer (2C3:3R2) of six catalytic PyrB chains organized as two trimers (C3), and six regulatory PyrI chains organized as three dimers (R2).

The enzyme catalyses carbamoyl phosphate + L-aspartate = N-carbamoyl-L-aspartate + phosphate + H(+). It participates in pyrimidine metabolism; UMP biosynthesis via de novo pathway; (S)-dihydroorotate from bicarbonate: step 2/3. Catalyzes the condensation of carbamoyl phosphate and aspartate to form carbamoyl aspartate and inorganic phosphate, the committed step in the de novo pyrimidine nucleotide biosynthesis pathway. This is Aspartate carbamoyltransferase catalytic subunit from Wolbachia pipientis subsp. Culex pipiens (strain wPip).